We begin with the raw amino-acid sequence, 2287 residues long: Protein Ycf2 (2287 aa).

1641–1648 serves as a coordination point for ATP; sequence GSIGTGRS.

It belongs to the Ycf2 family.

Its subcellular location is the plastid. It is found in the chloroplast stroma. Functionally, probable ATPase of unknown function. Its presence in a non-photosynthetic plant (Epifagus virginiana) and experiments in tobacco indicate that it has an essential function which is probably not related to photosynthesis. The protein is Protein Ycf2 of Lepidium virginicum (Virginia pepperweed).